The following is a 130-amino-acid chain: Small ribosomal subunit protein uS12c (130 aa).

This sequence belongs to the universal ribosomal protein uS12 family. In terms of assembly, part of the 30S ribosomal subunit.

The protein resides in the plastid. It localises to the chloroplast. Its function is as follows. With S4 and S5 plays an important role in translational accuracy. Located at the interface of the 30S and 50S subunits. This Tetradesmus obliquus (Green alga) protein is Small ribosomal subunit protein uS12c (rps12).